A 116-amino-acid chain; its full sequence is L-amino-acid oxidase BjussuLAAO-II (116 aa).

Residue 42 to 45 (GPMR) coordinates FAD. Substrate contacts are provided by Arg-45 and His-78.

This sequence belongs to the flavin monoamine oxidase family. FIG1 subfamily. As to quaternary structure, homodimer; non-covalently linked. Requires FAD as cofactor. In terms of processing, glycosylated. Expressed by the venom gland.

It localises to the secreted. It catalyses the reaction an L-alpha-amino acid + O2 + H2O = a 2-oxocarboxylate + H2O2 + NH4(+). It carries out the reaction L-leucine + O2 + H2O = 4-methyl-2-oxopentanoate + H2O2 + NH4(+). The enzyme catalyses L-phenylalanine + O2 + H2O = 3-phenylpyruvate + H2O2 + NH4(+). The catalysed reaction is L-methionine + O2 + H2O = 4-methylsulfanyl-2-oxobutanoate + H2O2 + NH4(+). It catalyses the reaction L-isoleucine + O2 + H2O = (S)-3-methyl-2-oxopentanoate + H2O2 + NH4(+). It carries out the reaction L-histidine + O2 + H2O = 3-(imidazol-5-yl)pyruvate + H2O2 + NH4(+). The enzyme catalyses L-tyrosine + O2 + H2O = 3-(4-hydroxyphenyl)pyruvate + H2O2 + NH4(+). The catalysed reaction is L-tryptophan + O2 + H2O = indole-3-pyruvate + H2O2 + NH4(+). With respect to regulation, its enzymatic activities is reduced by the presence of Zn(2+), Al(3+), Cu(2+), Na(+) or Ni(2+) salts. In terms of biological role, catalyzes an oxidative deamination of predominantly hydrophobic and aromatic L-amino acids, thus producing hydrogen peroxide that may contribute to the diverse toxic effects of this enzyme. Shows very high enzymatic activity on L-Met and L-Leu, high activity on L-Ile, L-Phe and L-Tyr and moderate activity on L-His. Exhibits diverse biological activities, such as hemorrhage, hemolysis, edema, apoptosis of vascular endothelial cells or tumor cell lines, and antibacterial, as well as regulation of platelet aggregation. Effects of snake L-amino oxidases on platelets are controversial, since they either induce aggregation or inhibit agonist-induced aggregation. These different effects are probably due to different experimental conditions. In vitro, has a strong antiprotozoal effect against Leishmania amazonensis (IC(50)=4.56 ug/mL) and Trypanosoma cruzi (IC(50)=4.85 ug/mL). It also causes cell death and DNA damage in hepatocarcinoma cells (HepG2) in vitro by inducing oxidative stress. It exerts cytotoxicity towards colorectal adenocarcinomahuman cells (Caco-2) by acting on multiple intracellular targets. It diminishes cell viability by decreasing mitochondrial activity, the activity of acid phosphatases, and lysosomal function. In addition, it increases intracellular levels of reactive oxygen species and DNA damage, it elevates the expression of the pro-inflammatory cytokine genes TNF and IL6, and lowers the expression of the apoptotic-related genes. Also induces cytotoxicity (IC(50)=1.80 ug/mL) and apoptosis in MCF-7 cells (a human breast adeno-carcinoma cell line) by activating the intrinsic and extrinsic apoptosis pathways, but are not cytotoxic towards MCF-10A cells (a non-tumorigenic human breast epithelial cell line). This is L-amino-acid oxidase BjussuLAAO-II from Bothrops jararacussu (Jararacussu).